The chain runs to 357 residues: MIVLGIETSCDETGVALYNTIPWEEGKPAFQGILGQGLHSQIAMHRDYGGVVPELASRDHIRRVLPLLDESLAQSGLKLSDIDAVAFTQGPGLAGALLVGSAFAKSLAQGLNLPSIGVHHLEGHLLSPLLGQTAPQFPFIALLVSGGHTQLMKVSGIGQYKLLGETLDDAAGEAFDKTAKLLGLDYPGGAAISKLAEKGRPGIFDLPKPMLHSGDLDFSFSGLKTAVLNQTKKFTEKNIVGADEIAQFHADLARSFVDSIVAVLVSKSEKALKQTGCKHLVLAGGVGANLQLRAALNEKASRNGFEVHYPPLELCTDNGVMIAFAGALRMLAENNGSNTSGAFDIKPRWDLQSNNLK.

Fe cation is bound by residues histidine 120 and histidine 124. Substrate contacts are provided by residues 143–147, aspartate 176, glycine 189, and asparagine 289; that span reads LVSGG. Fe cation is bound at residue aspartate 317.

This sequence belongs to the KAE1 / TsaD family. Fe(2+) is required as a cofactor.

The protein localises to the cytoplasm. It catalyses the reaction L-threonylcarbamoyladenylate + adenosine(37) in tRNA = N(6)-L-threonylcarbamoyladenosine(37) in tRNA + AMP + H(+). In terms of biological role, required for the formation of a threonylcarbamoyl group on adenosine at position 37 (t(6)A37) in tRNAs that read codons beginning with adenine. Is involved in the transfer of the threonylcarbamoyl moiety of threonylcarbamoyl-AMP (TC-AMP) to the N6 group of A37, together with TsaE and TsaB. TsaD likely plays a direct catalytic role in this reaction. The protein is tRNA N6-adenosine threonylcarbamoyltransferase of Polynucleobacter asymbioticus (strain DSM 18221 / CIP 109841 / QLW-P1DMWA-1) (Polynucleobacter necessarius subsp. asymbioticus).